Consider the following 433-residue polypeptide: Keratin, type I cytoskeletal 47 kDa (433 aa).

The head stretch occupies residues 1–73 (MSYSTRSISQ…AFNVSVTSNN (73 aa)). Positions 74-109 (GKETMQNLNDRLANYLDRVRSLEQANHELELKIREY) are coil 1A. Residues 74–385 (GKETMQNLND…RLLEGEDTRF (312 aa)) form the IF rod domain. Positions 110-127 (LDKKAAVGSLDYSGYYNT) are linker 1. The interval 128 to 219 (INLLRSQIND…KNHEEELAVV (92 aa)) is coil 1B. A linker 12 region spans residues 220–242 (RSSARGNVDVQVDSAPPVDLAQI). Positions 243–381 (MADVRSQYES…ATYRRLLEGE (139 aa)) are coil 2. Residues 382–433 (DTRFSQTETQKAVTIVSKEQSSSSIKKVKTVIEEVVDGKVVSSRVEELTETS) form a tail region.

This sequence belongs to the intermediate filament family. As to quaternary structure, heterotetramer of two type I and two type II keratins.

The protein is Keratin, type I cytoskeletal 47 kDa (xk70a) of Xenopus laevis (African clawed frog).